The following is a 348-amino-acid chain: Dihydroorotase (348 aa).

Zn(2+) is bound by residues H17 and H19. Residues 19-21 and N45 each bind substrate; that span reads HLR. Zn(2+) contacts are provided by K103, H140, and H178. K103 is subject to N6-carboxylysine. A substrate-binding site is contributed by H140. Substrate is bound at residue L223. D251 is a binding site for Zn(2+). D251 is an active-site residue. H255 and A267 together coordinate substrate.

Belongs to the metallo-dependent hydrolases superfamily. DHOase family. Class II DHOase subfamily. In terms of assembly, homodimer. Zn(2+) serves as cofactor.

It carries out the reaction (S)-dihydroorotate + H2O = N-carbamoyl-L-aspartate + H(+). It participates in pyrimidine metabolism; UMP biosynthesis via de novo pathway; (S)-dihydroorotate from bicarbonate: step 3/3. In terms of biological role, catalyzes the reversible cyclization of carbamoyl aspartate to dihydroorotate. This chain is Dihydroorotase, found in Yersinia pseudotuberculosis serotype I (strain IP32953).